The primary structure comprises 427 residues: Intermediate conductance calcium-activated potassium channel protein 4 (427 aa).

The chain crosses the membrane as a helical span at residues 29–49 (ALVLAGTGIGLMVLHAEMLWF). Residues 59 to 79 (FLVKCTISISTFLLLCLIVAF) traverse the membrane as a helical segment. Residues 108–128 (IVLELVVCGLHPAPVRGPPCV) form a helical membrane-spanning segment. Residues 143-163 (GFLGQGEALLSLAMLLRLYLV) form a helical membrane-spanning segment. A helical transmembrane segment spans residues 207-227 (LLLGLTLGLWLTTAWVLSVAE). An intramembrane region (pore-forming) is located at residues 241–261 (LWLIPITFLTIGYGDVVPGTM). Residues 265–285 (IVCLCTGVMGVCCTALLVAVV) traverse the membrane as a helical segment. The calmodulin-binding stretch occupies residues 286 to 347 (ARKLEFNKAE…RRHQRKLLAA (62 aa)). H358 is subject to Phosphohistidine.

Belongs to the potassium channel KCNN family. KCa3.1/KCNN4 subfamily. In terms of assembly, homodimer. Homotetramer. Heterotetramer of potassium channel proteins. Interacts with MTMR6; this interaction leads to selective dephosphorylation of PI(3)P in a lipid microdomain adjacent to KCNN4, resulting in a decrease of intermediate conductance calcium-activated potassium channel activity. Interacts (via the C-tail domain) with CALM1; the calmodulin binding is constitutive, does not require calcium and mediates calcium-dependent gating and four calmodulin molecules bind to one channel tetramer. In terms of processing, phosphorylation at His-358 by NDKB activates the intermediate conductance calcium-activated potassium channel activity, and conversely it's dephosphorylation by PHPT1 inhibits this activity. Widely expressed in non-excitable tissues.

It is found in the cell membrane. The protein localises to the cell projection. The protein resides in the ruffle membrane. It catalyses the reaction K(+)(in) = K(+)(out). The channel is inhibited by clotrimazole and charybdotoxin but is insensitive to apamin. In terms of biological role, intermediate conductance calcium-activated potassium channel that mediates the voltage-independent transmembrane transfer of potassium across the cell membrane through a constitutive interaction with calmodulin which binds the intracellular calcium allowing its opening. The current is characterized by a voltage-independent activation, an intracellular calcium concentration increase-dependent activation and a single-channel conductance of about 25 picosiemens. Also presents an inwardly rectifying current, thus reducing its already small outward conductance of potassium ions, which is particularly the case when the membrane potential displays positive values, above + 20 mV. Controls calcium influx during vascular contractility by being responsible of membrane hyperpolarization induced by vasoactive factors in proliferative vascular smooth muscle cell types. Following calcium influx, the consecutive activation of KCNN4 channel leads to a hyperpolarization of the cell membrane potential and hence an increase of the electrical driving force for further calcium influx promoting sustained calcium entry in response to stimulation with chemotactic peptides. Required for maximal calcium influx and proliferation during the reactivation of naive T-cells. Plays a role in the late stages of EGF-induced macropinocytosis through activation by PI(3)P. The sequence is that of Intermediate conductance calcium-activated potassium channel protein 4 from Homo sapiens (Human).